The following is a 483-amino-acid chain: 1-aminocyclopropane-1-carboxylate synthase 2 (483 aa).

K275 bears the N6-(pyridoxal phosphate)lysine mark.

Belongs to the class-I pyridoxal-phosphate-dependent aminotransferase family. Requires pyridoxal 5'-phosphate as cofactor.

It catalyses the reaction S-adenosyl-L-methionine = 1-aminocyclopropane-1-carboxylate + S-methyl-5'-thioadenosine + H(+). It functions in the pathway alkene biosynthesis; ethylene biosynthesis via S-adenosyl-L-methionine; ethylene from S-adenosyl-L-methionine: step 1/2. Catalyzes the formation of 1-aminocyclopropane-1-carboxylate, a direct precursor of ethylene in higher plants. Involved in defense response by producing ethylene after pathogen infection. Involved in several phosphate deficiency-induced adaptive responses, such as lateral root elongation. The protein is 1-aminocyclopropane-1-carboxylate synthase 2 of Oryza sativa subsp. japonica (Rice).